Here is a 1009-residue protein sequence, read N- to C-terminus: Mediator of RNA polymerase II transcription subunit 5 (1009 aa).

The protein belongs to the Mediator complex subunit 5 family. As to quaternary structure, component of the Mediator complex.

It is found in the nucleus. Its function is as follows. Component of the Mediator complex, a coactivator involved in the regulated transcription of nearly all RNA polymerase II-dependent genes. Mediator functions as a bridge to convey information from gene-specific regulatory proteins to the basal RNA polymerase II transcription machinery. Mediator is recruited to promoters by direct interactions with regulatory proteins and serves as a scaffold for the assembly of a functional preinitiation complex with RNA polymerase II and the general transcription factors. The protein is Mediator of RNA polymerase II transcription subunit 5 (nut1) of Neosartorya fischeri (strain ATCC 1020 / DSM 3700 / CBS 544.65 / FGSC A1164 / JCM 1740 / NRRL 181 / WB 181) (Aspergillus fischerianus).